The following is a 189-amino-acid chain: Putative OVARIAN TUMOR DOMAIN-containing deubiquitinating enzyme 8 (189 aa).

One can recognise an OTU domain in the interval 1-103 (MMKSDGNCQF…GIHFNSIYKK (103 aa)). Asp-5 is a catalytic residue. The Nucleophile role is filled by Cys-8. The active site involves His-96. The disordered stretch occupies residues 105–189 (KEKGSRSSSS…NRNHHFHYSE (85 aa)). Positions 120–181 (WMKLQRKKEN…KKEKKEKKNR (62 aa)) form a coiled coil. 2 consecutive short sequence motifs (nuclear localization signal) follow at residues 125–132 (RKKENEAK) and 163–170 (KKKAKVQK). Basic and acidic residues predominate over residues 126–174 (KKENEAKKKEEEEKERKDMEKEEKKKDKEDKKKDKEDKKKAKVQKEKKE). Positions 175–189 (KKEKKNRNHHFHYSE) are enriched in basic residues.

It belongs to the peptidase C85 family.

The protein resides in the nucleus. The enzyme catalyses Thiol-dependent hydrolysis of ester, thioester, amide, peptide and isopeptide bonds formed by the C-terminal Gly of ubiquitin (a 76-residue protein attached to proteins as an intracellular targeting signal).. Hydrolase that can remove conjugated ubiquitin from proteins in vitro and may therefore play an important regulatory role at the level of protein turnover by preventing degradation. The polypeptide is Putative OVARIAN TUMOR DOMAIN-containing deubiquitinating enzyme 8 (Arabidopsis thaliana (Mouse-ear cress)).